A 355-amino-acid chain; its full sequence is 4-hydroxy-3-methylbut-2-en-1-yl diphosphate synthase (flavodoxin) (355 aa).

The [4Fe-4S] cluster site is built by C266, C269, C301, and E308.

The protein belongs to the IspG family. It depends on [4Fe-4S] cluster as a cofactor.

It carries out the reaction (2E)-4-hydroxy-3-methylbut-2-enyl diphosphate + oxidized [flavodoxin] + H2O + 2 H(+) = 2-C-methyl-D-erythritol 2,4-cyclic diphosphate + reduced [flavodoxin]. It participates in isoprenoid biosynthesis; isopentenyl diphosphate biosynthesis via DXP pathway; isopentenyl diphosphate from 1-deoxy-D-xylulose 5-phosphate: step 5/6. In terms of biological role, converts 2C-methyl-D-erythritol 2,4-cyclodiphosphate (ME-2,4cPP) into 1-hydroxy-2-methyl-2-(E)-butenyl 4-diphosphate. The polypeptide is 4-hydroxy-3-methylbut-2-en-1-yl diphosphate synthase (flavodoxin) (Caldanaerobacter subterraneus subsp. tengcongensis (strain DSM 15242 / JCM 11007 / NBRC 100824 / MB4) (Thermoanaerobacter tengcongensis)).